The chain runs to 179 residues: UPF0302 protein EF_1554 (179 aa).

The protein belongs to the UPF0302 family.

The polypeptide is UPF0302 protein EF_1554 (Enterococcus faecalis (strain ATCC 700802 / V583)).